Here is a 78-residue protein sequence, read N- to C-terminus: Omega-conotoxin-like 12 (78 aa).

Residues 1 to 22 (MKLTCVVIVAVLLLTACQLITA) form the signal peptide. Positions 23–42 (DDSRGTQKHRSLRSTTKVSK) are excised as a propeptide. Cystine bridges form between Cys46–Cys62, Cys53–Cys65, and Cys61–Cys72.

Belongs to the conotoxin O1 superfamily. As to expression, expressed by the venom duct.

Its subcellular location is the secreted. Omega-conotoxins act at presynaptic membranes, they bind and block voltage-gated calcium channels (Cav). In Conus striatus (Striated cone), this protein is Omega-conotoxin-like 12.